The primary structure comprises 21 residues: DYE-linked aldehyde dehydrogenase, gamma chain (21 aa).

Heterotetramer composed of an alpha, a beta and two gamma chains. Requires [2Fe-2S] cluster as cofactor.

Functionally, active with aldehydes and formate esters as substrates. This is DYE-linked aldehyde dehydrogenase, gamma chain from Amycolatopsis methanolica.